The following is a 210-amino-acid chain: Ribosomal RNA small subunit methyltransferase G (210 aa).

S-adenosyl-L-methionine is bound by residues glycine 76, methionine 81, 127 to 128 (VE), and arginine 145.

The protein belongs to the methyltransferase superfamily. RNA methyltransferase RsmG family.

The protein resides in the cytoplasm. It catalyses the reaction guanosine(527) in 16S rRNA + S-adenosyl-L-methionine = N(7)-methylguanosine(527) in 16S rRNA + S-adenosyl-L-homocysteine. Specifically methylates the N7 position of guanine in position 527 of 16S rRNA. In Acinetobacter baumannii (strain SDF), this protein is Ribosomal RNA small subunit methyltransferase G.